The following is a 302-amino-acid chain: HTH-type transcriptional regulator GbpR (302 aa).

The HTH lysR-type domain maps to 1–56; the sequence is MSHLRMLVMIEEHGQVSAAAAAMNMTQPAASRMLSEMEAIVKSPLCQRASRGVVLT. A DNA-binding region (H-T-H motif) is located at residues 16–35; it reads VSAAAAAMNMTQPAASRMLS.

Belongs to the LysR transcriptional regulatory family.

Activator of the expression of chvE when bound to its inducer and represses its expression in the absence of inducer (L-arabinose, D-fucose or D-galactose). Negatively regulates its own expression. This is HTH-type transcriptional regulator GbpR (gbpR) from Rhizobium radiobacter (Agrobacterium tumefaciens).